Here is a 215-residue protein sequence, read N- to C-terminus: UPF0502 protein YceH (215 aa).

Residue Lys80 is modified to N6-acetyllysine.

This sequence belongs to the UPF0502 family.

The sequence is that of UPF0502 protein YceH from Shigella sonnei (strain Ss046).